A 263-amino-acid polypeptide reads, in one-letter code: Proline rich transmembrane protein 1B (263 aa).

The span at 1–17 (MEAGAGGAGSDTKGGGS) shows a compositional bias: gly residues. Residues 1–107 (MEAGAGGAGS…IGFVGEPPPY (107 aa)) are disordered. Composition is skewed to low complexity over residues 37-47 (QMPAQPALPQL) and 75-86 (DAPAQAAGEAGP). Transmembrane regions (helical) follow at residues 190-210 (MMES…IAIV) and 238-258 (VLFS…YVVV).

The protein belongs to the CD225/Dispanin family.

The protein resides in the membrane. This is Proline rich transmembrane protein 1B from Homo sapiens (Human).